A 439-amino-acid polypeptide reads, in one-letter code: L-tryptophan decarboxylase (439 aa).

Belongs to the phosphatidylserine decarboxylase family.

The catalysed reaction is L-tryptophan + H(+) = tryptamine + CO2. It functions in the pathway secondary metabolite biosynthesis. Functionally, L-tryptophan decarboxylase; part of the gene cluster that mediates the biosynthesis of psilocybin, a psychotropic tryptamine-derived natural product. The first step in the pathway is the decarboxylation of L-tryptophan to tryptamine by the decarboxylase psiD. PsiD does not decarboxylate phenylalanine, tyrosine, or 5-hydroxy- L -tryptophan (5-HTP). 4-hydroxy-L-tryptophan is accepted as substrate by psiD as well. The cytochrome P450 monooxygenase psiH then converts tryptamine to 4-hydroxytryptamine. The kinase psiK catalyzes the 4-O-phosphorylation step by converting 4-hydroxytryptamine into norbaeocystin. The methyltransferase psiM then catalyzes iterative methyl transfer to the amino group of norbaeocystin to yield psilocybin via a monomethylated intermediate, baeocystin. 4-hydroxy-6-methyl-l-tryptophancan also be converted the decarboxylase PsiD, kinase PsiK, and methyltransferase PsiM into respectively 6-methyl-norbaeocystin, 6-methylbaeocystin, and 6-methylpsilocybin. This chain is L-tryptophan decarboxylase, found in Psilocybe cyanescens.